We begin with the raw amino-acid sequence, 67 residues long: Large ribosomal subunit protein uL29 (67 aa).

Belongs to the universal ribosomal protein uL29 family.

The polypeptide is Large ribosomal subunit protein uL29 (Sulfurihydrogenibium sp. (strain YO3AOP1)).